The chain runs to 1236 residues: Calcium-activated potassium channel subunit alpha-1 (1236 aa).

The segment covering 1-21 (MANGGGGGGGSSGGGGGGGGS) has biased composition (gly residues). The segment at 1–61 (MANGGGGGGG…SSSSSSSSSV (61 aa)) is disordered. Residues 1 to 86 (MANGGGGGGG…VPCDSRGQRM (86 aa)) are Extracellular-facing. Positions 39-60 (SSSSSSSSSSSSSSSSSSSSSS) are enriched in low complexity. A helical transmembrane segment spans residues 87–107 (WWAFLASSMVTFFGGLFIILL). Residues 108 to 178 (WRTLKYLWTV…MISAQTLTGR (71 aa)) lie on the Cytoplasmic side of the membrane. 3 S-palmitoyl cysteine lipidation sites follow: Cys-118, Cys-119, and Cys-121. The helical transmembrane segment at 179–199 (VLVVLVFALSIGALVIYFIDS) threads the bilayer. Topologically, residues 200–214 (SNPIESCQNFYKDFT) are extracellular. Residues 215–235 (LQIDMAFNVFFLLYFGLRFIA) traverse the membrane as a helical segment. Topologically, residues 236–239 (ANDK) are cytoplasmic. A helical membrane pass occupies residues 240 to 260 (LWFWLEVNSVVDFFTVPPVFV). Residues 261 to 264 (SVYL) lie on the Extracellular side of the membrane. Residues 265–285 (NRSWLGLRFLRALRLIQFSEI) form a helical membrane-spanning segment. The Cytoplasmic portion of the chain corresponds to 286-300 (LQFLNILKTSNSIKL). A helical transmembrane segment spans residues 301–321 (VNLLSIFISTWLTAAGFIHLV). The Extracellular segment spans residues 322–335 (ENSGDPWENFQNNQ). Residues 336-358 (ALTYWECVYLLMVTMSTVGYGDV) constitute an intramembrane region (pore-forming). The short motif at 352–355 (TVGY) is the Selectivity for potassium element. The Extracellular portion of the chain corresponds to 359–367 (YAKTTLGRL). Residues 368–388 (FMVFFILGGLAMFASYVPEII) form a helical membrane-spanning segment. Topologically, residues 389–1236 (ELIGNRKKYG…KQKYVQEERL (848 aa)) are cytoplasmic. The region spanning 407 to 549 (RKHIVVCGHI…WNWKEGDDAI (143 aa)) is the RCK N-terminal 1 domain. The Mg(2+) site is built by Glu-439, Gln-462, and Glu-464. The tract at residues 556–576 (LGFIAQSCLAQGLSTMLANLF) is segment S7. A segment S8 region spans residues 613–633 (LSFPTVCELCFVKLKLLMIAI). The interval 677–681 (CKACH) is heme-binding motif. A disordered region spans residues 757–787 (EDEQPSTLSPKKKQRNGGMRNSPNTSPKLMR). Thr-763 is subject to Phosphothreonine. 3 positions are modified to phosphoserine: Ser-765, Ser-778, and Ser-782. The tract at residues 837-857 (VLSGHVVVCIFGDVSSALIGL) is segment S9. Residues 839–983 (SGHVVVCIFG…MDRSSPDNSP (145 aa)) enclose the RCK N-terminal 2 domain. A Phosphothreonine modification is found at Thr-970. 2 positions are modified to phosphoserine: Ser-978 and Ser-982. The Calcium bowl signature appears at 1003 to 1025 (TELVNDTNVQFLDQDDDDDPDTE). 4 residues coordinate Ca(2+): Gln-1012, Asp-1015, Asp-1018, and Asp-1020. A segment S10 region spans residues 1032 to 1052 (FACGTAFAVSVLDSLMSATYF). The segment covering 1186-1211 (RASLSHSSHSSQSSSKKSSSVHSIPS) has biased composition (low complexity). The tract at residues 1186–1236 (RASLSHSSHSSQSSSKKSSSVHSIPSTANRQNRPKSRESRDKQKYVQEERL) is disordered. Positions 1220–1236 (KSRESRDKQKYVQEERL) are enriched in basic and acidic residues. A phosphoserine mark is found at Ser-1221 and Ser-1224.

It belongs to the potassium channel family. Calcium-activated (TC 1.A.1.3) subfamily. KCa1.1/KCNMA1 sub-subfamily. As to quaternary structure, homotetramer; which constitutes the calcium-activated potassium channel. Interacts with RAB11B. Interacts with beta subunits KCNMB1, KCNMB2, KCNMB3 and KCNMB4. Interacts with gamma subunits LRRC26, LRRC38, LRRC52 and LRRC55. Beta and gamma subunits are accessory, and modulate its activity. In terms of processing, phosphorylated. Phosphorylation by kinases such as PKA and/or PKG. In smooth muscles, phosphorylation affects its activity. Palmitoylation by ZDHHC22 and ZDHHC23 within the intracellular linker between the S0 and S1 transmembrane domains regulates localization to the plasma membrane. Depalmitoylated by LYPLA1 and LYPLAL1, leading to retard exit from the trans-Golgi network. In terms of tissue distribution, widely expressed. Except in myocytes, it is almost ubiquitously expressed.

It is found in the cell membrane. It catalyses the reaction K(+)(in) = K(+)(out). With respect to regulation, ethanol and carbon monoxide-bound heme increase channel activation. Heme inhibits channel activation. Potassium channel activated by both membrane depolarization or increase in cytosolic Ca(2+) that mediates export of K(+). It is also activated by the concentration of cytosolic Mg(2+). Its activation dampens the excitatory events that elevate the cytosolic Ca(2+) concentration and/or depolarize the cell membrane. It therefore contributes to repolarization of the membrane potential. Plays a key role in controlling excitability in a number of systems, such as regulation of the contraction of smooth muscle, the tuning of hair cells in the cochlea, regulation of transmitter release, and innate immunity. In smooth muscles, its activation by high level of Ca(2+), caused by ryanodine receptors in the sarcoplasmic reticulum, regulates the membrane potential. In cochlea cells, its number and kinetic properties partly determine the characteristic frequency of each hair cell and thereby helps to establish a tonotopic map. Kinetics of KCNMA1 channels are determined by alternative splicing, phosphorylation status and its combination with modulating beta subunits. Highly sensitive to both iberiotoxin (IbTx) and charybdotoxin (CTX). Possibly induces sleep when activated by melatonin and through melatonin receptor MTNR1A-dependent dissociation of G-beta and G-gamma subunits, leading to increased sensitivity to Ca(2+) and reduced synaptic transmission. Functionally, potassium channel activated by both membrane depolarization or increase in cytosolic Ca(2+) that mediates export of K(+). This chain is Calcium-activated potassium channel subunit alpha-1, found in Homo sapiens (Human).